A 197-amino-acid polypeptide reads, in one-letter code: Ribonuclease HII (197 aa).

Residues 11 to 197 enclose the RNase H type-2 domain; the sequence is NLIAGVDEVG…FAPVRKILGL (187 aa). The a divalent metal cation site is built by Asp-17, Glu-18, and Asp-109.

This sequence belongs to the RNase HII family. The cofactor is Mn(2+). Requires Mg(2+) as cofactor.

The protein localises to the cytoplasm. The enzyme catalyses Endonucleolytic cleavage to 5'-phosphomonoester.. In terms of biological role, endonuclease that specifically degrades the RNA of RNA-DNA hybrids. This Haemophilus ducreyi (strain 35000HP / ATCC 700724) protein is Ribonuclease HII.